Consider the following 118-residue polypeptide: UPF0102 protein STH1475 (118 aa).

It belongs to the UPF0102 family.

This Symbiobacterium thermophilum (strain DSM 24528 / JCM 14929 / IAM 14863 / T) protein is UPF0102 protein STH1475.